The following is a 100-amino-acid chain: Urease subunit gamma (100 aa).

Belongs to the urease gamma subunit family. Heterotrimer of UreA (gamma), UreB (beta) and UreC (alpha) subunits. Three heterotrimers associate to form the active enzyme.

It localises to the cytoplasm. It carries out the reaction urea + 2 H2O + H(+) = hydrogencarbonate + 2 NH4(+). The protein operates within nitrogen metabolism; urea degradation; CO(2) and NH(3) from urea (urease route): step 1/1. The protein is Urease subunit gamma of Acinetobacter baumannii (strain AB307-0294).